We begin with the raw amino-acid sequence, 69 residues long: Omega-oxotoxin-Ol1a (69 aa).

The region spanning 1-68 (DWECLPLHSS…GKINTCDKYK (68 aa)) is the Oxytoxin-type inhibitor cystine knot (ICK) domain. 5 cysteine pairs are disulfide-bonded: cysteine 4-cysteine 18, cysteine 11-cysteine 23, cysteine 15-cysteine 64, cysteine 17-cysteine 52, and cysteine 25-cysteine 50. Asparagine 69 is subject to Asparagine amide.

It belongs to the spiderine family. Spiderine subfamily. In terms of tissue distribution, expressed by the venom gland.

Its subcellular location is the secreted. Its function is as follows. Weak blocker of vertebrate P/Q-, N- and L-type voltage-gated calcium channels (Cav1 and Cav2). Is both paralytic and lethal when injected into lepidopteran larvae. Is not toxic to mice. The polypeptide is Omega-oxotoxin-Ol1a (Oxyopes lineatus (Lynx spider)).